A 316-amino-acid polypeptide reads, in one-letter code: Pantothenate kinase (316 aa).

95–102 (GSVAVGKS) lines the ATP pocket.

It belongs to the prokaryotic pantothenate kinase family.

It is found in the cytoplasm. It carries out the reaction (R)-pantothenate + ATP = (R)-4'-phosphopantothenate + ADP + H(+). It participates in cofactor biosynthesis; coenzyme A biosynthesis; CoA from (R)-pantothenate: step 1/5. The protein is Pantothenate kinase of Shewanella baltica (strain OS195).